Reading from the N-terminus, the 145-residue chain is D-aminoacyl-tRNA deacylase (145 aa).

Positions 137-138 (GP) match the Gly-cisPro motif, important for rejection of L-amino acids motif.

This sequence belongs to the DTD family. As to quaternary structure, homodimer.

The protein resides in the cytoplasm. It carries out the reaction glycyl-tRNA(Ala) + H2O = tRNA(Ala) + glycine + H(+). The enzyme catalyses a D-aminoacyl-tRNA + H2O = a tRNA + a D-alpha-amino acid + H(+). Its function is as follows. An aminoacyl-tRNA editing enzyme that deacylates mischarged D-aminoacyl-tRNAs. Also deacylates mischarged glycyl-tRNA(Ala), protecting cells against glycine mischarging by AlaRS. Acts via tRNA-based rather than protein-based catalysis; rejects L-amino acids rather than detecting D-amino acids in the active site. By recycling D-aminoacyl-tRNA to D-amino acids and free tRNA molecules, this enzyme counteracts the toxicity associated with the formation of D-aminoacyl-tRNA entities in vivo and helps enforce protein L-homochirality. This Escherichia coli O81 (strain ED1a) protein is D-aminoacyl-tRNA deacylase.